The primary structure comprises 58 residues: MAVPKKKTSKGKRNQRHAIWKAKAATAAQRALSIGKSVLSGRAQGFVYPMQESDDDES.

The protein belongs to the bacterial ribosomal protein bL32 family.

The protein is Large ribosomal subunit protein bL32 of Prochlorococcus marinus (strain MIT 9303).